A 663-amino-acid polypeptide reads, in one-letter code: UvrABC system protein B (663 aa).

Residues 1–10 are compositionally biased toward basic and acidic residues; sequence MIDKRDDKPF. Residues 1-23 form a disordered region; it reads MIDKRDDKPFKLKSKYKPSGDQP. Positions 31–418 constitute a Helicase ATP-binding domain; the sequence is DNIEGGEKAQ…TNTIIEQIIR (388 aa). 44-51 contacts ATP; it reads GATGTGKT. Residues 97 to 120 carry the Beta-hairpin motif; sequence YYDYYQPEAYVPSSDTYIEKDSSV. The Helicase C-terminal domain occupies 435–601; sequence QMDDLLGEIN…TIKKDIRGLI (167 aa). Residues 627–662 enclose the UVR domain; the sequence is KEAINALQKQMQEAAELLDFELAAQMRDLILELKLM.

The protein belongs to the UvrB family. Forms a heterotetramer with UvrA during the search for lesions. Interacts with UvrC in an incision complex.

Its subcellular location is the cytoplasm. Functionally, the UvrABC repair system catalyzes the recognition and processing of DNA lesions. A damage recognition complex composed of 2 UvrA and 2 UvrB subunits scans DNA for abnormalities. Upon binding of the UvrA(2)B(2) complex to a putative damaged site, the DNA wraps around one UvrB monomer. DNA wrap is dependent on ATP binding by UvrB and probably causes local melting of the DNA helix, facilitating insertion of UvrB beta-hairpin between the DNA strands. Then UvrB probes one DNA strand for the presence of a lesion. If a lesion is found the UvrA subunits dissociate and the UvrB-DNA preincision complex is formed. This complex is subsequently bound by UvrC and the second UvrB is released. If no lesion is found, the DNA wraps around the other UvrB subunit that will check the other stand for damage. The protein is UvrABC system protein B of Streptococcus pyogenes serotype M6 (strain ATCC BAA-946 / MGAS10394).